We begin with the raw amino-acid sequence, 139 residues long: Nucleoside diphosphate kinase (139 aa).

ATP-binding residues include Lys11, Phe59, Arg87, Thr93, Arg104, and Asn114. The active-site Pros-phosphohistidine intermediate is His117.

The protein belongs to the NDK family. As to quaternary structure, homotetramer. The cofactor is Mg(2+).

It localises to the cytoplasm. The enzyme catalyses a 2'-deoxyribonucleoside 5'-diphosphate + ATP = a 2'-deoxyribonucleoside 5'-triphosphate + ADP. It catalyses the reaction a ribonucleoside 5'-diphosphate + ATP = a ribonucleoside 5'-triphosphate + ADP. Functionally, major role in the synthesis of nucleoside triphosphates other than ATP. The ATP gamma phosphate is transferred to the NDP beta phosphate via a ping-pong mechanism, using a phosphorylated active-site intermediate. This Flavobacterium johnsoniae (strain ATCC 17061 / DSM 2064 / JCM 8514 / BCRC 14874 / CCUG 350202 / NBRC 14942 / NCIMB 11054 / UW101) (Cytophaga johnsonae) protein is Nucleoside diphosphate kinase.